We begin with the raw amino-acid sequence, 344 residues long: UDP-3-O-acylglucosamine N-acyltransferase (344 aa).

The active-site Proton acceptor is the His-248.

It belongs to the transferase hexapeptide repeat family. LpxD subfamily. In terms of assembly, homotrimer.

It carries out the reaction a UDP-3-O-[(3R)-3-hydroxyacyl]-alpha-D-glucosamine + a (3R)-hydroxyacyl-[ACP] = a UDP-2-N,3-O-bis[(3R)-3-hydroxyacyl]-alpha-D-glucosamine + holo-[ACP] + H(+). It participates in bacterial outer membrane biogenesis; LPS lipid A biosynthesis. Catalyzes the N-acylation of UDP-3-O-acylglucosamine using 3-hydroxyacyl-ACP as the acyl donor. Is involved in the biosynthesis of lipid A, a phosphorylated glycolipid that anchors the lipopolysaccharide to the outer membrane of the cell. The sequence is that of UDP-3-O-acylglucosamine N-acyltransferase from Prochlorococcus marinus subsp. pastoris (strain CCMP1986 / NIES-2087 / MED4).